Reading from the N-terminus, the 325-residue chain is Beta-ketoacyl-[acyl-carrier-protein] synthase III (325 aa).

Residues Cys-112 and His-250 contribute to the active site. Positions 251 to 255 are ACP-binding; it reads QANSR. Asn-280 is a catalytic residue.

Belongs to the thiolase-like superfamily. FabH family. Homodimer.

It localises to the cytoplasm. It carries out the reaction malonyl-[ACP] + acetyl-CoA + H(+) = 3-oxobutanoyl-[ACP] + CO2 + CoA. It participates in lipid metabolism; fatty acid biosynthesis. Catalyzes the condensation reaction of fatty acid synthesis by the addition to an acyl acceptor of two carbons from malonyl-ACP. Catalyzes the first condensation reaction which initiates fatty acid synthesis and may therefore play a role in governing the total rate of fatty acid production. Possesses both acetoacetyl-ACP synthase and acetyl transacylase activities. Its substrate specificity determines the biosynthesis of branched-chain and/or straight-chain of fatty acids. This chain is Beta-ketoacyl-[acyl-carrier-protein] synthase III, found in Lactococcus lactis subsp. lactis (strain IL1403) (Streptococcus lactis).